The sequence spans 33 residues: Cytochrome b6-f complex subunit 6 (33 aa).

A helical transmembrane segment spans residues 4 to 24; the sequence is ITIISYFGFLLASIIFTLVLF.

This sequence belongs to the PetL family. The 4 large subunits of the cytochrome b6-f complex are cytochrome b6, subunit IV (17 kDa polypeptide, PetD), cytochrome f and the Rieske protein, while the 4 small subunits are PetG, PetL, PetM and PetN. The complex functions as a dimer.

The protein localises to the plastid. The protein resides in the chloroplast thylakoid membrane. Component of the cytochrome b6-f complex, which mediates electron transfer between photosystem II (PSII) and photosystem I (PSI), cyclic electron flow around PSI, and state transitions. PetL is important for photoautotrophic growth as well as for electron transfer efficiency and stability of the cytochrome b6-f complex. The protein is Cytochrome b6-f complex subunit 6 of Pinus thunbergii (Japanese black pine).